A 450-amino-acid polypeptide reads, in one-letter code: Isoleucine 2-epimerase (450 aa).

Residues G115 to S116, Y142, and D250 to N253 each bind pyridoxal 5'-phosphate. Residue K280 is modified to N6-(pyridoxal phosphate)lysine. Residue T309 participates in pyridoxal 5'-phosphate binding.

The protein belongs to the class-III pyridoxal-phosphate-dependent aminotransferase family. As to quaternary structure, homotetramer. Pyridoxal 5'-phosphate serves as cofactor.

It carries out the reaction L-isoleucine = D-allo-isoleucine. Its function is as follows. Catalyzes the epimerization of L-isoleucine to D-allo-isoleucine and D-allo-isoleucine to L-isoleucine. Can also catalyze the racemization of many nonpolar amino acids, including leucine and valine. Does not have GABA aminotransferase activity. This is Isoleucine 2-epimerase from Lentilactobacillus buchneri (Lactobacillus buchneri).